A 144-amino-acid chain; its full sequence is Maximins 6/H10 (144 aa).

A signal peptide spans 1-18 (MNFKYIVAVSFLIASAYA). The propeptide occupies 19-43 (RSVKNDEQSLSQRDVLDEESLREIR). N70 is subject to Asparagine amide. Positions 74-123 (TAEDHEVMKRLEAVMRDLDSLDHPEEASERETRGFNQEEIANRFTKKEKR) are excised as a propeptide. A Leucine amide modification is found at L143.

The protein belongs to the bombinin family. In terms of tissue distribution, expressed by the skin glands.

It is found in the secreted. Functionally, maximin-6 shows antimicrobial activity against bacteria and against the fungus C.albicans. It has little hemolytic activity. Maximin-H10 shows antimicrobial activity against bacteria and against the fungus C.albicans. Shows strong hemolytic activity. The sequence is that of Maximins 6/H10 from Bombina maxima (Giant fire-bellied toad).